The chain runs to 197 residues: Holliday junction branch migration complex subunit RuvA (197 aa).

A domain I region spans residues 1 to 63 (MFEYLNGKLV…EDAHSLYGFV (63 aa)). The domain II stretch occupies residues 64–142 (NEAEKALFLR…ATGTVGISLL (79 aa)). The tract at residues 142-146 (LDAGP) is flexible linker. The tract at residues 147-197 (AGNLALEEAIEALQALGYKATELKKIEKKLAQETGLTSEEYIKSALKLMMK) is domain III.

It belongs to the RuvA family. As to quaternary structure, homotetramer. Forms an RuvA(8)-RuvB(12)-Holliday junction (HJ) complex. HJ DNA is sandwiched between 2 RuvA tetramers; dsDNA enters through RuvA and exits via RuvB. An RuvB hexamer assembles on each DNA strand where it exits the tetramer. Each RuvB hexamer is contacted by two RuvA subunits (via domain III) on 2 adjacent RuvB subunits; this complex drives branch migration. In the full resolvosome a probable DNA-RuvA(4)-RuvB(12)-RuvC(2) complex forms which resolves the HJ.

The protein resides in the cytoplasm. Its function is as follows. The RuvA-RuvB-RuvC complex processes Holliday junction (HJ) DNA during genetic recombination and DNA repair, while the RuvA-RuvB complex plays an important role in the rescue of blocked DNA replication forks via replication fork reversal (RFR). RuvA specifically binds to HJ cruciform DNA, conferring on it an open structure. The RuvB hexamer acts as an ATP-dependent pump, pulling dsDNA into and through the RuvAB complex. HJ branch migration allows RuvC to scan DNA until it finds its consensus sequence, where it cleaves and resolves the cruciform DNA. This is Holliday junction branch migration complex subunit RuvA from Lactococcus lactis subsp. lactis (strain IL1403) (Streptococcus lactis).